Here is a 1695-residue protein sequence, read N- to C-terminus: Protein TOPAZ1 (1695 aa).

Disordered stretches follow at residues 1 to 128, 441 to 474, and 725 to 753; these read MRRH…DDPQ, MAQT…ELRR, and AEVR…NSVT. Over residues 43-52 the composition is skewed to basic residues; sequence RRKNRQKRRM. 3 stretches are compositionally biased toward basic and acidic residues: residues 59–68, 92–113, and 459–474; these read GKDKVERDRS, SDRR…ERHT, and NEYH…ELRR. Residues 735–753 show a composition bias toward polar residues; the sequence is SVSMTTSGPQTLSIQNSVT.

It is found in the cytoplasm. The protein localises to the cytosol. Functionally, important for normal spermatogenesis and male fertility. Specifically required for progression to the post-meiotic stages of spermatocyte development. Seems to be necessary for normal expression levels of a number of testis-expressed gene transcripts, although its role in this process is unclear. In Callithrix jacchus (White-tufted-ear marmoset), this protein is Protein TOPAZ1 (TOPAZ1).